The sequence spans 248 residues: Tetrachloro-P-hydroquinone reductive dehalogenase (248 aa).

One can recognise a GST N-terminal domain in the interval Pro-2–Ile-84. The GST C-terminal domain maps to Tyr-133–Ile-248.

Belongs to the GST superfamily. Homodimer.

The enzyme catalyses 2,6-dichlorohydroquinone + glutathione disulfide + chloride + H(+) = 2,3,6-trichlorohydroquinone + 2 glutathione. The catalysed reaction is 2,3,6-trichlorohydroquinone + glutathione disulfide + chloride = 2,3,5,6-tetrachlorohydroquinone + 2 glutathione. It functions in the pathway xenobiotic degradation; pentachlorophenol degradation. In terms of biological role, sequential reduction of tetrachloro-p-hydroquinone to monochlorophenol, using glutathione as the reducing agent. In Sphingobium chlorophenolicum, this protein is Tetrachloro-P-hydroquinone reductive dehalogenase (pcpC).